A 667-amino-acid chain; its full sequence is Phosphomethylpyrimidine synthase (667 aa).

Substrate-binding positions include N235, M264, Y293, H329, 349 to 351, 390 to 393, and E429; these read SRG and DGMR. A Zn(2+)-binding site is contributed by H433. Y456 provides a ligand contact to substrate. H497 is a binding site for Zn(2+). [4Fe-4S] cluster contacts are provided by C577, C580, and C585. Residues 618 to 642 form a disordered region; that stretch reads DSYTGSESDTAKRASQREQGMAQMS.

Belongs to the ThiC family. As to quaternary structure, homodimer. [4Fe-4S] cluster is required as a cofactor.

It carries out the reaction 5-amino-1-(5-phospho-beta-D-ribosyl)imidazole + S-adenosyl-L-methionine = 4-amino-2-methyl-5-(phosphooxymethyl)pyrimidine + CO + 5'-deoxyadenosine + formate + L-methionine + 3 H(+). Its pathway is cofactor biosynthesis; thiamine diphosphate biosynthesis. Catalyzes the synthesis of the hydroxymethylpyrimidine phosphate (HMP-P) moiety of thiamine from aminoimidazole ribotide (AIR) in a radical S-adenosyl-L-methionine (SAM)-dependent reaction. The sequence is that of Phosphomethylpyrimidine synthase from Shewanella pealeana (strain ATCC 700345 / ANG-SQ1).